Consider the following 301-residue polypeptide: Probable alpha-L-glutamate ligase 2 (301 aa).

The ATP-grasp domain maps to Met-104–Val-287. Residues Lys-141, Glu-178–Tyr-179, Asp-187, and Arg-211–Asn-213 contribute to the ATP site. The Mg(2+) site is built by Asp-248, Glu-260, and Asn-262. The Mn(2+) site is built by Asp-248, Glu-260, and Asn-262.

Belongs to the RimK family. Mg(2+) is required as a cofactor. Mn(2+) serves as cofactor.

In Pseudoalteromonas atlantica (strain T6c / ATCC BAA-1087), this protein is Probable alpha-L-glutamate ligase 2.